We begin with the raw amino-acid sequence, 462 residues long: Argininosuccinate lyase (462 aa).

The protein belongs to the lyase 1 family. Argininosuccinate lyase subfamily.

The protein resides in the cytoplasm. It carries out the reaction 2-(N(omega)-L-arginino)succinate = fumarate + L-arginine. It participates in amino-acid biosynthesis; L-arginine biosynthesis; L-arginine from L-ornithine and carbamoyl phosphate: step 3/3. The protein is Argininosuccinate lyase of Prochlorococcus marinus (strain MIT 9211).